We begin with the raw amino-acid sequence, 369 residues long: MAKLSLRNVQKTYAGNVKVVHGIDMEIADGEFIVIVGPSGCGKSTLLRMVAGLETITGGDIHIGDRVVNNLEPAERDIAMVFQNYALYPHMSVYDNMAYGLKIRGMAKAEIEQRVKHAAGILELAPLLDRKPRQLSGGQRQRVAMGRAIVREPSVFLFDEPLSNLDAKLRVQMRLELKELHRRLGTTSLYVTHDQVEAMTLADRMMVLNGGRVEQIGTPLEVYTRPASTFVAGFIGSPPMNLVPVARNGGMAGAGGVAQMRVLGKEGGASDATLGHLPMGLHLPAEALLGLRPEHIEPCAAHDAIAEVDVRVVEALGADSFAYGSLGGQPIVVRLDSHARVRAGDKLPVTSSPDHLHFFDAQSGKRIEA.

Positions 4–235 constitute an ABC transporter domain; it reads LSLRNVQKTY…PASTFVAGFI (232 aa). 37-44 serves as a coordination point for ATP; that stretch reads GPSGCGKS.

The protein belongs to the ABC transporter superfamily. sn-glycerol-3-phosphate importer (TC 3.A.1.1.3) family. As to quaternary structure, the complex is composed of two ATP-binding proteins (UgpC), two transmembrane proteins (UgpA and UgpE) and a solute-binding protein (UgpB).

Its subcellular location is the cell inner membrane. The catalysed reaction is sn-glycerol 3-phosphate(out) + ATP + H2O = sn-glycerol 3-phosphate(in) + ADP + phosphate + H(+). Functionally, part of the ABC transporter complex UgpBAEC involved in sn-glycerol-3-phosphate (G3P) import. Responsible for energy coupling to the transport system. The polypeptide is sn-glycerol-3-phosphate import ATP-binding protein UgpC (Cupriavidus pinatubonensis (strain JMP 134 / LMG 1197) (Cupriavidus necator (strain JMP 134))).